The chain runs to 396 residues: Decapping and exoribonuclease protein (396 aa).

Residues 1–20 (MDPRGTKRGAEKTEVAEPRN) are compositionally biased toward basic and acidic residues. The interval 1 to 37 (MDPRGTKRGAEKTEVAEPRNKLPRPAPSLPTDPALYS) is disordered. Substrate is bound by residues arginine 58, glutamate 101, and 131-133 (WRG). A Mg(2+)-binding site is contributed by glutamate 192. Residues cysteine 217 and glutamate 234 each coordinate substrate. Positions 234, 236, 253, and 254 each coordinate Mg(2+). Residues lysine 255 and glutamine 280 each contribute to the substrate site. Threonine 392 carries the phosphothreonine modification. The residue at position 394 (serine 394) is a Phosphoserine.

Belongs to the DXO/Dom3Z family. Mg(2+) is required as a cofactor. In terms of tissue distribution, ubiquitously expressed.

It localises to the nucleus. It carries out the reaction a 5'-end triphospho-ribonucleoside in mRNA + H2O = a 5'-end phospho-ribonucleoside in mRNA + diphosphate + H(+). It catalyses the reaction a 5'-end NAD(+)-phospho-ribonucleoside in mRNA + H2O = a 5'-end phospho-ribonucleoside in mRNA + NAD(+) + H(+). The enzyme catalyses a 5'-end NAD(+)-phospho-ribonucleoside in snoRNA + H2O = a 5'-end phospho-ribonucleoside in snoRNA + NAD(+) + H(+). The catalysed reaction is a 5'-end (N(7)-methyl 5'-triphosphoguanosine)-ribonucleoside-ribonucleotide in mRNA + H2O = a (N(7)-methyl 5'-triphosphoguanosine)-nucleoside + a 5'-end phospho-ribonucleoside in mRNA + H(+). It carries out the reaction a 5'-end FAD-phospho-ribonucleoside in mRNA + H2O = a 5'-end phospho-ribonucleoside in mRNA + FAD + H(+). It catalyses the reaction a 5'-end CoA-ribonucleoside in mRNA + H2O = 3'-dephospho-CoA + a 5'-end phospho-ribonucleoside in mRNA + H(+). Decapping enzyme for NAD-capped RNAs: specifically hydrolyzes the nicotinamide adenine dinucleotide (NAD) cap from a subset of RNAs by removing the entire NAD moiety from the 5'-end of an NAD-capped RNA. The NAD-cap is present at the 5'-end of some RNAs and snoRNAs. In contrast to the canonical 5'-end N7 methylguanosine (m7G) cap, the NAD cap promotes mRNA decay. Preferentially acts on NAD-capped transcripts in response to environmental stress. Also acts as a non-canonical decapping enzyme that removes the entire cap structure of m7G capped or incompletely capped RNAs and mediates their subsequent degradation. Specifically degrades pre-mRNAs with a defective 5'-end m7G cap and is part of a pre-mRNA capping quality control. Has decapping activity toward incomplete 5'-end m7G cap mRNAs such as unmethylated 5'-end-capped RNA (cap0), while it has no activity toward 2'-O-ribose methylated m7G cap (cap1). In contrast to canonical decapping enzymes DCP2 and NUDT16, which cleave the cap within the triphosphate linkage, the decapping activity releases the entire cap structure GpppN and a 5'-end monophosphate RNA. Also has 5'-3' exoribonuclease activities: The 5'-end monophosphate RNA is then degraded by the 5'-3' exoribonuclease activity, enabling this enzyme to decap and degrade incompletely capped mRNAs. Also possesses RNA 5'-pyrophosphohydrolase activity by hydrolyzing the 5'-end triphosphate to release pyrophosphates. Exhibits decapping activity towards FAD-capped RNAs. Exhibits decapping activity towards dpCoA-capped RNAs in vitro. This chain is Decapping and exoribonuclease protein, found in Homo sapiens (Human).